Reading from the N-terminus, the 901-residue chain is Protein translocase subunit SecA (901 aa).

Residues glutamine 87, 105–109 (GEGKT), and aspartate 512 each bind ATP. Positions 859–901 (HQDDDSAAAAALAAQTGERKVGRNDPCPCGSGKKYKQCHGRLQ) are disordered. 4 residues coordinate Zn(2+): cysteine 885, cysteine 887, cysteine 896, and histidine 897. Basic residues predominate over residues 891 to 901 (KKYKQCHGRLQ).

It belongs to the SecA family. In terms of assembly, monomer and homodimer. Part of the essential Sec protein translocation apparatus which comprises SecA, SecYEG and auxiliary proteins SecDF-YajC and YidC. It depends on Zn(2+) as a cofactor.

The protein localises to the cell inner membrane. Its subcellular location is the cytoplasm. It carries out the reaction ATP + H2O + cellular proteinSide 1 = ADP + phosphate + cellular proteinSide 2.. In terms of biological role, part of the Sec protein translocase complex. Interacts with the SecYEG preprotein conducting channel. Has a central role in coupling the hydrolysis of ATP to the transfer of proteins into and across the cell membrane, serving both as a receptor for the preprotein-SecB complex and as an ATP-driven molecular motor driving the stepwise translocation of polypeptide chains across the membrane. The polypeptide is Protein translocase subunit SecA (Escherichia coli (strain 55989 / EAEC)).